We begin with the raw amino-acid sequence, 206 residues long: Small ribosomal subunit protein uS4 (206 aa).

In terms of domain architecture, S4 RNA-binding spans 96-157 (SRLDNVVYRM…KAKKQVRIQE (62 aa)).

Belongs to the universal ribosomal protein uS4 family. Part of the 30S ribosomal subunit. Contacts protein S5. The interaction surface between S4 and S5 is involved in control of translational fidelity.

Functionally, one of the primary rRNA binding proteins, it binds directly to 16S rRNA where it nucleates assembly of the body of the 30S subunit. With S5 and S12 plays an important role in translational accuracy. The sequence is that of Small ribosomal subunit protein uS4 from Neisseria gonorrhoeae (strain ATCC 700825 / FA 1090).